Consider the following 86-residue polypeptide: MIOREX complex component 7 (86 aa).

In terms of assembly, associates with the mitochondrial ribosome.

The protein resides in the mitochondrion. In terms of biological role, component of MIOREX complexes, large expressome-like assemblies of ribosomes with factors involved in all the steps of post-transcriptional gene expression. This is MIOREX complex component 7 from Saccharomyces cerevisiae (strain ATCC 204508 / S288c) (Baker's yeast).